The primary structure comprises 464 residues: Cyclin-dependent kinase 8 (464 aa).

Positions 1-15 (MDYDFKVKLSSERER) are interaction with CCNC. Residues 21–335 (EYEGCKVGRG…SEQAMQDPYF (315 aa)) form the Protein kinase domain. ATP contacts are provided by residues 27–35 (VGRGTYGHV) and K52. The active-site Proton acceptor is D151. The tract at residues 358-464 (FLTEEEPDEK…PQYSHQTHRY (107 aa)) is disordered. The span at 373–391 (QQQQQGNNHTNGTGHPGNQ) shows a compositional bias: low complexity. 2 stretches are compositionally biased toward polar residues: residues 409–426 (PTTT…QRSN) and 436–464 (PSTS…THRY).

This sequence belongs to the protein kinase superfamily. CMGC Ser/Thr protein kinase family. CDC2/CDKX subfamily. Component of the Mediator complex, which is composed of MED1, MED4, MED6, MED7, MED8, MED9, MED10, MED11, MED12, MED13, MED13L, MED14, MED15, MED16, MED17, MED18, MED19, MED20, MED21, MED22, MED23, MED24, MED25, MED26, MED27, MED29, MED30, MED31, CCNC, CDK8 and CDC2L6/CDK11. The MED12, MED13, CCNC and CDK8 subunits form a distinct module termed the CDK8 module. Mediator containing the CDK8 module is less active than Mediator lacking this module in supporting transcriptional activation. Individual preparations of the Mediator complex lacking one or more distinct subunits have been variously termed ARC, CRSP, DRIP, PC2, SMCC and TRAP. The cylin/CDK pair formed by CCNC/CDK8 also associates with the large subunit of RNA polymerase II. Interacts with CTNNB1, GLI3 and MAML1. The cofactor is Mg(2+).

It localises to the nucleus. It catalyses the reaction L-seryl-[protein] + ATP = O-phospho-L-seryl-[protein] + ADP + H(+). The enzyme catalyses L-threonyl-[protein] + ATP = O-phospho-L-threonyl-[protein] + ADP + H(+). It carries out the reaction [DNA-directed RNA polymerase] + ATP = phospho-[DNA-directed RNA polymerase] + ADP + H(+). Its function is as follows. Component of the Mediator complex, a coactivator involved in regulated gene transcription of nearly all RNA polymerase II-dependent genes. Mediator functions as a bridge to convey information from gene-specific regulatory proteins to the basal RNA polymerase II transcription machinery. Mediator is recruited to promoters by direct interactions with regulatory proteins and serves as a scaffold for the assembly of a functional pre-initiation complex with RNA polymerase II and the general transcription factors. Phosphorylates the CTD (C-terminal domain) of the large subunit of RNA polymerase II (RNAp II), which may inhibit the formation of a transcription initiation complex. Phosphorylates CCNH leading to down-regulation of the TFIIH complex and transcriptional repression. Recruited through interaction with MAML1 to hyperphosphorylate the intracellular domain of NOTCH, leading to its degradation. This is Cyclin-dependent kinase 8 (Cdk8) from Mus musculus (Mouse).